The primary structure comprises 226 residues: Orotate phosphoribosyltransferase 1 (226 aa).

Lys-30 contributes to the 5-phospho-alpha-D-ribose 1-diphosphate binding site. 38-39 (FF) is an orotate binding site. 5-phospho-alpha-D-ribose 1-diphosphate is bound by residues 76–77 (YK), Arg-106, Lys-107, Lys-110, His-112, and 132–140 (DDVMTAGTA). 2 residues coordinate orotate: Thr-136 and Arg-164. Ser-213 and Ser-225 each carry phosphoserine.

The protein belongs to the purine/pyrimidine phosphoribosyltransferase family. PyrE subfamily. As to quaternary structure, homodimer.

It catalyses the reaction orotidine 5'-phosphate + diphosphate = orotate + 5-phospho-alpha-D-ribose 1-diphosphate. It functions in the pathway pyrimidine metabolism; UMP biosynthesis via de novo pathway; UMP from orotate: step 1/2. Catalyzes the transfer of a ribosyl phosphate group from 5-phosphoribose 1-diphosphate to orotate, leading to the formation of orotidine monophosphate (OMP). This is Orotate phosphoribosyltransferase 1 (URA5) from Saccharomyces cerevisiae (strain ATCC 204508 / S288c) (Baker's yeast).